We begin with the raw amino-acid sequence, 343 residues long: MNKILIRNFCTNIKNESTKPLIDNIYKNILKDNFKIVEIKDCKNNRGLFYNPIESPTQTLSVINPKTNKPNLIFKEEPFISYPSIIKSNENICNHCLKEIKKEEEEIKQECEECKVYKYCSIECKEKSSIEYHSVLCKSTGSGFNYLEKHASIEKRRFPLLAGKILARMIMGYHLEKSSKSTWLPLQMLSFAKKPPPLEWKDDYLIFSRSLLKGINNESMKKKFDYDWFVRVMQILYLNTIGIDIDPNQQSTKMSSPESGIGLYLLTSFINHDCDPNAFIHFPDDHTMHLSPLKPINPGDEITISYTDTTKDLVDRRSQLFENYGFNCECKKCLNDLLIKRNK.

One can recognise an SET domain in the interval 77-307 (EPFISYPSII…PGDEITISYT (231 aa)). Zn(2+)-binding residues include C93, C96, C111, C114, C120, C124, H133, and C137. The MYND-type zinc-finger motif lies at 93–137 (CNHCLKEIKKEEEEIKQECEECKVYKYCSIECKEKSSIEYHSVLC).

The protein belongs to the class V-like SAM-binding methyltransferase superfamily.

Probable methyltransferase. This Dictyostelium discoideum (Social amoeba) protein is SET and MYND domain-containing protein DDB_G0292454.